We begin with the raw amino-acid sequence, 361 residues long: Peptide chain release factor 1 (361 aa).

Q235 is subject to N5-methylglutamine.

Belongs to the prokaryotic/mitochondrial release factor family. Methylated by PrmC. Methylation increases the termination efficiency of RF1.

It localises to the cytoplasm. Functionally, peptide chain release factor 1 directs the termination of translation in response to the peptide chain termination codons UAG and UAA. This chain is Peptide chain release factor 1, found in Chlamydia abortus (strain DSM 27085 / S26/3) (Chlamydophila abortus).